Consider the following 286-residue polypeptide: Energy-coupling factor transporter ATP-binding protein EcfA2 (286 aa).

The region spanning 3–246 is the ABC transporter domain; it reads IQFNQVSYIY…KTQLLKWHIE (244 aa). An ATP-binding site is contributed by 40 to 47; it reads GQTGSGKS.

It belongs to the ABC transporter superfamily. Energy-coupling factor EcfA family. In terms of assembly, forms a stable energy-coupling factor (ECF) transporter complex composed of 2 membrane-embedded substrate-binding proteins (S component), 2 ATP-binding proteins (A component) and 2 transmembrane proteins (T component).

The protein localises to the cell membrane. Its function is as follows. ATP-binding (A) component of a common energy-coupling factor (ECF) ABC-transporter complex. Unlike classic ABC transporters this ECF transporter provides the energy necessary to transport a number of different substrates. The chain is Energy-coupling factor transporter ATP-binding protein EcfA2 from Staphylococcus epidermidis (strain ATCC 35984 / DSM 28319 / BCRC 17069 / CCUG 31568 / BM 3577 / RP62A).